A 67-amino-acid polypeptide reads, in one-letter code: DNA-directed RNA polymerase subunit omega (67 aa).

It belongs to the RNA polymerase subunit omega family. The RNAP catalytic core consists of 2 alpha, 1 beta, 1 beta' and 1 omega subunit. When a sigma factor is associated with the core the holoenzyme is formed, which can initiate transcription.

It carries out the reaction RNA(n) + a ribonucleoside 5'-triphosphate = RNA(n+1) + diphosphate. Promotes RNA polymerase assembly. Latches the N- and C-terminal regions of the beta' subunit thereby facilitating its interaction with the beta and alpha subunits. The chain is DNA-directed RNA polymerase subunit omega from Burkholderia multivorans (strain ATCC 17616 / 249).